A 185-amino-acid polypeptide reads, in one-letter code: Elongation factor P (185 aa).

It belongs to the elongation factor P family.

Its subcellular location is the cytoplasm. It functions in the pathway protein biosynthesis; polypeptide chain elongation. In terms of biological role, involved in peptide bond synthesis. Stimulates efficient translation and peptide-bond synthesis on native or reconstituted 70S ribosomes in vitro. Probably functions indirectly by altering the affinity of the ribosome for aminoacyl-tRNA, thus increasing their reactivity as acceptors for peptidyl transferase. This Aromatoleum aromaticum (strain DSM 19018 / LMG 30748 / EbN1) (Azoarcus sp. (strain EbN1)) protein is Elongation factor P.